A 316-amino-acid chain; its full sequence is UDP-N-acetylenolpyruvoylglucosamine reductase (316 aa).

The region spanning 27 to 225 is the FAD-binding PCMH-type domain; that stretch reads VGGKAERFYR…KTAINALLKK (199 aa). Arginine 190 is an active-site residue. The active-site Proton donor is serine 239. Glutamate 309 is a catalytic residue.

This sequence belongs to the MurB family. It depends on FAD as a cofactor.

It is found in the cytoplasm. It catalyses the reaction UDP-N-acetyl-alpha-D-muramate + NADP(+) = UDP-N-acetyl-3-O-(1-carboxyvinyl)-alpha-D-glucosamine + NADPH + H(+). It participates in cell wall biogenesis; peptidoglycan biosynthesis. Cell wall formation. The sequence is that of UDP-N-acetylenolpyruvoylglucosamine reductase from Coxiella burnetii (strain CbuG_Q212) (Coxiella burnetii (strain Q212)).